The primary structure comprises 31 residues: Nemertide alpha-5 (31 aa).

3 disulfide bridges follow: Cys2-Cys16, Cys9-Cys20, and Cys15-Cys26. Pro28 and Pro29 each carry 4-hydroxyproline.

It belongs to the nemertide family. In terms of tissue distribution, confined to the epidermis and to the mucus layer.

It is found in the secreted. Its function is as follows. Highly potent toxin against both insect and some mammalian sodium channels (Nav). It potently inhibits inactivation of insect sodium channels of B.germanica (BgNav1) (EC(50)=7.8 nM) and also delays the inactivation of mammalian Nav with potent activity on Nav1.3/SCN3A and Nav1.4/SCN4A (hNav1.1/SCN1A; EC(50)=102.1 nM, rNav1.2/SCN2A; EC(50)=156.1 nM, rNav1.3/SCN3A; EC(50)=9.4 nM, rNav1.4/SCN4A; EC(50)=15.4 nM, hNav1.5/SCN5A; EC(50)=132.7 nM, mNav1.6/SCN8A; EC(50)=66.9 nM, hNav1.9/SCN9A; EC(50)=73 nM). 1 uM is enough to completely inhibits the inactivation, resulting in sustained non-inactivating currents. In addition, the toxin significantly enhances the recovery from inactivation, and the open state is not required for the toxin to interact with the channel. In vivo, injection into brine shrimp (Artemia salina) stops movement or causes death after 24 hours (EC(50)=0.4 uM). This Ramphogordius pseudolacteus (Ribbon worm) protein is Nemertide alpha-5.